The primary structure comprises 524 residues: Probable malate:quinone oxidoreductase (524 aa).

The protein belongs to the MQO family. FAD serves as cofactor.

The enzyme catalyses (S)-malate + a quinone = a quinol + oxaloacetate. Its pathway is carbohydrate metabolism; tricarboxylic acid cycle; oxaloacetate from (S)-malate (quinone route): step 1/1. This is Probable malate:quinone oxidoreductase from Blochmanniella floridana.